Consider the following 861-residue polypeptide: Seed linoleate 9S-lipoxygenase-3 (861 aa).

The region spanning 41–166 is the PLAT domain; that stretch reads QGFDILGSTV…HHKIDRIFFA (126 aa). The region spanning 169 to 861 is the Lipoxygenase domain; the sequence is TYLPSETPAP…FRGIPNSISI (693 aa). Positions 215 to 257 are disordered; sequence NPDSGENHARPVLGGSETYPYPRRGRTGRKPTRKDPNSESRSD. Basic residues predominate over residues 237 to 246; that stretch reads RRGRTGRKPT. A compositionally biased stretch (basic and acidic residues) spans 247–257; the sequence is RKDPNSESRSD. His-522, His-527, His-713, Asn-717, and Ile-861 together coordinate Fe cation.

It belongs to the lipoxygenase family. Fe cation is required as a cofactor.

Its subcellular location is the cytoplasm. The enzyme catalyses (9Z,12Z)-octadecadienoate + O2 = (9S)-hydroperoxy-(10E,12Z)-octadecadienoate. It functions in the pathway lipid metabolism; oxylipin biosynthesis. Its function is as follows. Plant lipoxygenase may be involved in a number of diverse aspects of plant physiology including growth and development, pest resistance, and senescence or responses to wounding. It catalyzes the hydroperoxidation of lipids containing a cis,cis-1,4-pentadiene structure. The protein is Seed linoleate 9S-lipoxygenase-3 (LOX1.3) of Pisum sativum (Garden pea).